A 273-amino-acid polypeptide reads, in one-letter code: Bis(5'-nucleosyl)-tetraphosphatase, symmetrical (273 aa).

It belongs to the Ap4A hydrolase family.

The enzyme catalyses P(1),P(4)-bis(5'-adenosyl) tetraphosphate + H2O = 2 ADP + 2 H(+). In terms of biological role, hydrolyzes diadenosine 5',5'''-P1,P4-tetraphosphate to yield ADP. The protein is Bis(5'-nucleosyl)-tetraphosphatase, symmetrical of Aeromonas salmonicida (strain A449).